We begin with the raw amino-acid sequence, 335 residues long: Acetyl-coenzyme A carboxylase carboxyl transferase subunit alpha (335 aa).

The CoA carboxyltransferase C-terminal domain maps to 40–294 (QLETLATRRR…KEAIEKHLDT (255 aa)).

Belongs to the AccA family. Acetyl-CoA carboxylase is a heterohexamer composed of biotin carboxyl carrier protein (AccB), biotin carboxylase (AccC) and two subunits each of ACCase subunit alpha (AccA) and ACCase subunit beta (AccD).

It is found in the cytoplasm. It catalyses the reaction N(6)-carboxybiotinyl-L-lysyl-[protein] + acetyl-CoA = N(6)-biotinyl-L-lysyl-[protein] + malonyl-CoA. Its pathway is lipid metabolism; malonyl-CoA biosynthesis; malonyl-CoA from acetyl-CoA: step 1/1. Component of the acetyl coenzyme A carboxylase (ACC) complex. First, biotin carboxylase catalyzes the carboxylation of biotin on its carrier protein (BCCP) and then the CO(2) group is transferred by the carboxyltransferase to acetyl-CoA to form malonyl-CoA. This is Acetyl-coenzyme A carboxylase carboxyl transferase subunit alpha from Prochlorococcus marinus (strain MIT 9312).